The chain runs to 748 residues: Histone-lysine N-methyltransferase EZH2 (748 aa).

Residues 183-199 (DYEDDEDGEDNQDDERD) are compositionally biased toward acidic residues. Disordered stretches follow at residues 183-215 (DYED…KETL) and 347-428 (TPPK…NIEP). Positions 200–215 (DITKDQDDNMEEKETL) are enriched in basic and acidic residues. Positions 348–359 (PPKRPSGRRRGR) are enriched in basic residues. Positions 376-387 (EAKDTDSDREAG) are enriched in basic and acidic residues. A CXC domain is found at 505 to 607 (CRKIQLKKDG…SKNVSCKNCS (103 aa)). One can recognise an SET domain in the interval 614–729 (KHLLLAPSDV…TGEELFFDYR (116 aa)).

This sequence belongs to the class V-like SAM-binding methyltransferase superfamily. Histone-lysine methyltransferase family. EZ subfamily. In terms of assembly, component of the prc2/eed-ezh2 complex.

It localises to the nucleus. It catalyses the reaction L-lysyl(27)-[histone H3] + 3 S-adenosyl-L-methionine = N(6),N(6),N(6)-trimethyl-L-lysyl(27)-[histone H3] + 3 S-adenosyl-L-homocysteine + 3 H(+). Its function is as follows. Polycomb group (PcG) protein. Catalytic subunit of the prc2/eed-ezh2 complex, which methylates 'Lys-9' and 'Lys-27' of histone H3, leading to transcriptional repression of the affected target gene. May regulate the circadian clock via histone methylation at the promoter of the circadian genes. The protein is Histone-lysine N-methyltransferase EZH2 (ezh2-b) of Xenopus laevis (African clawed frog).